Consider the following 554-residue polypeptide: MASQVSQMPSSSPLSSNKDEMRPKADFQPSIWGDLFLNCPDKNIDAETEKRHQQLKEEVRKMIVAPMANSTQKLAFIDSVQRLGVSYHFTKEIEDELENIYHNNNDAENDLYTTSLRFRLLREHGFNVSCDVFNKFKDEQGNFKSSVTSDVRGLLELYQASYLRVHGEDILDEAISFTTNHLSLAVASLDYPLSEEVSHALKQSIRRGLPRVEARHYLSVYQDIESHNKVLLEFAKIDFNMVQLLHRKELSEISRWWKDLDFQRKLPYARDRVVEGYFWISGVYFEPQYSLGRKMLTKVIAMASIVDDTYDSYATYEELIPYTKAIERWDIKCIDELPEYMKPSYKALLDVYEEMEQLVAKHGRQYRVEYAKNAMIRLAQSYLVEARWTLQNYKPSFEEFKANALPTCGYAMLAITSFVGMGDIVTPETFKWAANDPKIIQASTIICRFMDDVAEHKFKHRREDDCSAIECYMEEYGVTAQEAYDVFNKHVESAWKDVNKEFLKPTEMPTEVLNRSLNLARVMDVLYREGDGYTYVGKAAKGGITSLLIEPVAL.

Residues 1-16 show a composition bias toward low complexity; it reads MASQVSQMPSSSPLSS. Residues 1–23 are disordered; the sequence is MASQVSQMPSSSPLSSNKDEMRP. Residues D307, D311, and D451 each contribute to the Mg(2+) site. Residues 307–311 carry the DDXXD motif motif; that stretch reads DDTYD.

This sequence belongs to the terpene synthase family. Requires Mg(2+) as cofactor.

The catalysed reaction is (2E,6E)-farnesyl diphosphate = (1S,8aR)-delta-cadinene + diphosphate. It functions in the pathway secondary metabolite biosynthesis; terpenoid biosynthesis. Functionally, responsible for the cyclization of trans,trans-farnesyl diphosphate (FPP) to (+)-delta cadinene. The chain is (+)-delta-cadinene synthase isozyme XC14 from Gossypium arboreum (Tree cotton).